Here is a 249-residue protein sequence, read N- to C-terminus: Sesquipedalian-1 (249 aa).

The PH domain occupies 17-113 (PVDNAGFLYK…WVKALSRASF (97 aa)). Disordered stretches follow at residues 134–159 (GGMA…LAPV) and 194–219 (EATF…HGPL). Positions 140–152 (QPQPQSLPLPPSL) are enriched in pro residues. Ser-213 is subject to Phosphoserine. Residues 223–235 (PFARLHECYGQEI) carry the F&amp;H motif.

It belongs to the sesquipedalian family. As to quaternary structure, forms homodimers and heterodimers with PHETA2. Interacts with OCRL and INPP5B. Interaction with OCRL may be important for endosomal morphology and function.

It is found in the early endosome. The protein localises to the recycling endosome. The protein resides in the golgi apparatus. Its subcellular location is the trans-Golgi network. It localises to the cytoplasmic vesicle. It is found in the clathrin-coated vesicle. Its function is as follows. Plays a role in endocytic trafficking. Required for receptor recycling from endosomes, both to the trans-Golgi network and the plasma membrane. In Homo sapiens (Human), this protein is Sesquipedalian-1.